Here is a 393-residue protein sequence, read N- to C-terminus: NADH-quinone oxidoreductase subunit H 2 (393 aa).

10 helical membrane-spanning segments follow: residues 13–33 (VLVT…IVLV), 79–99 (AIFW…FAVI), 112–132 (VGLL…ILGG), 158–178 (LAFA…QGIV), 186–206 (VWGI…YIIA), 240–260 (LYFL…VTLF), 278–298 (LNYG…FTLI), 309–329 (VLLG…IPMV), 333–353 (MIGL…MIWF), and 368–388 (IGWK…AVLG).

Belongs to the complex I subunit 1 family. In terms of assembly, NDH-1 is composed of 14 different subunits. Subunits NuoA, H, J, K, L, M, N constitute the membrane sector of the complex.

Its subcellular location is the cell inner membrane. The catalysed reaction is a quinone + NADH + 5 H(+)(in) = a quinol + NAD(+) + 4 H(+)(out). NDH-1 shuttles electrons from NADH, via FMN and iron-sulfur (Fe-S) centers, to quinones in the respiratory chain. The immediate electron acceptor for the enzyme in this species is believed to be ubiquinone. Couples the redox reaction to proton translocation (for every two electrons transferred, four hydrogen ions are translocated across the cytoplasmic membrane), and thus conserves the redox energy in a proton gradient. This subunit may bind ubiquinone. This Solibacter usitatus (strain Ellin6076) protein is NADH-quinone oxidoreductase subunit H 2.